The following is a 121-amino-acid chain: UPF0102 protein BHWA1_02005 (121 aa).

The protein belongs to the UPF0102 family.

The sequence is that of UPF0102 protein BHWA1_02005 from Brachyspira hyodysenteriae (strain ATCC 49526 / WA1).